We begin with the raw amino-acid sequence, 88 residues long: Small ribosomal subunit protein bS16 (88 aa).

Belongs to the bacterial ribosomal protein bS16 family.

This chain is Small ribosomal subunit protein bS16, found in Mycoplasmopsis pulmonis (strain UAB CTIP) (Mycoplasma pulmonis).